The sequence spans 247 residues: uncharacterized protein (247 aa).

This sequence to M.pneumoniae MPN_635 N-terminal region.

This is an uncharacterized protein from Mycoplasma pneumoniae (strain ATCC 29342 / M129 / Subtype 1) (Mycoplasmoides pneumoniae).